The primary structure comprises 129 residues: Transcriptional activator protein (129 aa).

The interval 1 to 20 is disordered; that stretch reads MRSSSPSQPPSIKRAHRQAK. Positions 13–28 match the Nuclear localization signal motif; the sequence is KRAHRQAKKRAIRRRR. A zinc finger spans residues 33–50; that stretch reads CGCSIYFHLGCAGHGFTH. The tract at residues 73-118 is disordered; the sequence is LFQDTQSRGPTVYQNEGIPRTDTVQPQPEESVASPQSLPELPSLDD. Polar residues-rich tracts occupy residues 74–86 and 94–109; these read FQDT…TVYQ and DTVQ…SPQS. Ser-109 carries the phosphoserine; by host modification. The tract at residues 115–129 is transactivation; it reads SLDDVDDSFWINLFS.

The protein belongs to the geminiviridae transcriptional activator protein family. As to quaternary structure, monomer. Homodimer. Homooligomer. Self-interaction correlates with nuclear localization and efficient activation of transcription. Monomers suppress local silencing by interacting with and inactivating host adenosine kinase 2 (ADK2) in the cytoplasm. Interacts with and inhibits host SNF1 kinase. Post-translationally, phosphorylated at Ser-109 by A.thaliana KIN10.

The protein resides in the host nucleus. Its subcellular location is the host cytoplasm. Strong activator of the late viral genes promoters. Enhances the expression of the capsid protein and nuclear shuttle protein. Acts as a suppressor of RNA-mediated gene silencing, also known as post-transcriptional gene silencing (PTGS), a mechanism of plant viral defense that limits the accumulation of viral RNAs. Suppresses the host RNA silencing by inhibiting adenosine kinase 2 (ADK2), a kinase involved in a general methylation pathway. Also suppresses the host basal defense by interacting with and inhibiting SNF1 kinase, a key regulator of cell metabolism implicated in innate antiviral defense. Determines pathogenicity. The polypeptide is Transcriptional activator protein (Nicotiana tabacum (Common tobacco)).